An 801-amino-acid chain; its full sequence is Leucine--tRNA ligase (801 aa).

Positions 39 to 50 match the 'HIGH' region motif; it reads PYPSGAGIHVGH. The short motif at 578–582 is the 'KMSKS' region element; the sequence is KMSKS. Position 581 (lysine 581) interacts with ATP.

The protein belongs to the class-I aminoacyl-tRNA synthetase family.

Its subcellular location is the cytoplasm. The catalysed reaction is tRNA(Leu) + L-leucine + ATP = L-leucyl-tRNA(Leu) + AMP + diphosphate. The chain is Leucine--tRNA ligase from Mesoplasma florum (strain ATCC 33453 / NBRC 100688 / NCTC 11704 / L1) (Acholeplasma florum).